The primary structure comprises 143 residues: MSLSAKDKATVKDFFGKMSTRSDDIGAEALSRLVAVYPQTKSYFAHWKSASPGSAPVRKHGITIMGGVYDAVGKIDDLKAGLLSLSELHAFMLRVDPVNFKLLAHCMLVCMSMVFPEEFTPQVHVAVDKFLAQLALALCEKYR.

S2 bears the N-acetylserine mark. The 142-residue stretch at 2–143 (SLSAKDKATV…LALALCEKYR (142 aa)) folds into the Globin domain. H60 is a binding site for O2. H89 is a heme b binding site.

Belongs to the globin family. As to quaternary structure, hb 1 is a heterotetramer of two alpha-1 and two beta-1 chains. Red blood cells.

Functionally, involved in oxygen transport from gills to the various peripheral tissues. The polypeptide is Hemoglobin subunit alpha-1 (hba1) (Boreogadus saida (Polar cod)).